Reading from the N-terminus, the 451-residue chain is Protoheme IX farnesyltransferase, mitochondrial (451 aa).

Transmembrane regions (helical) follow at residues 149–169 (TILVMLSAICSYALSPYPATV), 240–260 (PTVAALGLSNIALYSWIYTSL), 265–285 (IINTWVGALVGAIPPLMGWAA), 289–309 (LTHPGSWCLAGLLYAWQFPHF), 339–359 (VALRYSLLMFPLCFGLSYFNI), and 414–434 (KAFFASVLHLPAVLILAILHK).

This sequence belongs to the UbiA prenyltransferase family.

Its subcellular location is the mitochondrion membrane. Converts protoheme IX and farnesyl diphosphate to heme O. This Candida glabrata (strain ATCC 2001 / BCRC 20586 / JCM 3761 / NBRC 0622 / NRRL Y-65 / CBS 138) (Yeast) protein is Protoheme IX farnesyltransferase, mitochondrial (COX10).